The chain runs to 145 residues: Allergen Sin a 1 (145 aa).

Residues 34–62 are disordered; it reads SGSGPSWTLDDEFDFEDDMENPQGPQQRP. A propeptide spanning residues 40-54 is cleaved from the precursor; that stretch reads WTLDDEFDFEDDMEN. A compositionally biased stretch (acidic residues) spans 42–53; the sequence is LDDEFDFEDDME.

This sequence belongs to the 2S seed storage albumins family. In terms of assembly, the protein consists of two chains linked by disulfide bonds.

Its function is as follows. This is a 2S seed storage protein. This is Allergen Sin a 1 from Sinapis alba (White mustard).